We begin with the raw amino-acid sequence, 377 residues long: Caspase-4 (377 aa).

The required for LPS-binding stretch occupies residues 1–59 (MAEGNHRKKPLKVLESLGKDFLTGVLDNLVEQNVLNWKEEEKKKYYDAKTEDKVRVMAD). A propeptide spanning residues 1 to 80 (MAEGNHRKKP…MLLQTFFNID (80 aa)) is cleaved from the precursor. A CARD domain is found at 1 to 91 (MAEGNHRKKP…ISPNKKAHPN (91 aa)). A2 carries the post-translational modification N-acetylalanine. A Phosphoserine modification is found at S83. Residues 84–104 (PNKKAHPNMEAGPPESGESTD) form a disordered region. Catalysis depends on residues H210 and C258. Positions 271–289 (SPASLEVASSQSSENLEED) are excised as a propeptide. R314 bears the (Microbial infection) ADP-riboxanated arginine mark.

Belongs to the peptidase C14A family. In terms of assembly, heterotetramer that consists of two anti-parallel arranged heterodimers, each one formed by a 20 kDa (Caspase-4 subunit p20) and a 10 kDa (Caspase-4 subunit p10) subunit. Upon direct LPS-binding, forms large homooligomers, resulting in its activation. These oligomers are often referred to as 'non-canonical inflammasomes'. In its precursor form, interacts with TMEM214; this interaction is required for association with the endoplasmic reticulum membrane. Interacts with CASP1. Interacts with NOD2. Interacts with SERPINB1; this interaction regulates CASP4 activity. As to quaternary structure, heterotetramer that consists of two anti-parallel arranged heterodimers, each one formed by a 20 kDa (Caspase-4 subunit p20) and a 10 kDa (Caspase-4 subunit p10) subunit. (Microbial infection) Interacts with NleF protein from pathogenic E.coli; this interaction leads to enzyme inhibition. In terms of assembly, (Microbial infection) Interacts with cathepsin CTSG; the interaction is promoted by the Td92 surface protein of the periodontal pathogen T.denticola and leads to CASP4 activation. In response to activation signals, undergoes autoproteolytic cleavage and activation. In terms of processing, (Microbial infection) ADP-riboxanation by S.flexneri OspC3 blocks CASP4 autoprocessing, preventing CASP4 activation and ability to recognize and cleave GSDMD, thereby thwarting the inflammasome/pyroptosis-mediated defense. As to expression, widely expressed, including in keratinocytes and colonic and small intestinal epithelial cells (at protein level). Not detected in brain.

The protein resides in the cytoplasm. Its subcellular location is the cytosol. The protein localises to the endoplasmic reticulum membrane. It localises to the mitochondrion. It is found in the inflammasome. The protein resides in the secreted. The enzyme catalyses Strict requirement for Asp at the P1 position. It has a preferred cleavage sequence of Tyr-Val-Ala-Asp-|- but also cleaves at Asp-Glu-Val-Asp-|-.. With respect to regulation, activated by homooligomerization induced by direct binding to cytosolic LPS, in a TLR4-independent manner. In addition to LPS, CASP4/CASP11 may also be activated by oxidized phospholipid 1-palmitoyl-2-arachidonoyl- sn-glycero-3-phosphorylcholine, an oxidized phospholipid (oxPAPC), in dendritic cells, promoting adaptive immunity. The role of oxPAPC is however unclear and another report suggests that oxPAPC competes with LPS-binding and inhibits the non-canonical inflammasome in macrophages. Inflammatory caspase that acts as the effector of the non-canonical inflammasome by mediating lipopolysaccharide (LPS)-induced pyroptosis. Also indirectly activates the NLRP3 and NLRP6 inflammasomes. Acts as a thiol protease that cleaves a tetrapeptide after an Asp residue at position P1: catalyzes cleavage of CGAS, GSDMD and IL18. Effector of the non-canonical inflammasome independently of NLRP3 inflammasome and CASP1: the non-canonical inflammasome promotes pyroptosis through GSDMD cleavage without involving secretion of cytokine IL1B. In the non-canonical inflammasome, CASP4 is activated by direct binding to the lipid A moiety of LPS without the need of an upstream sensor. LPS-binding promotes CASP4 activation and CASP4-mediated cleavage of GSDMD and IL18, followed by IL18 secretion through the GSDMD pore, pyroptosis of infected cells and their extrusion into the gut lumen. Also indirectly promotes secretion of mature cytokines (IL1A and HMGB1) downstream of GSDMD-mediated pyroptosis via activation of the NLRP3 and NLRP6 inflammasomes. Involved in NLRP3-dependent CASP1 activation and IL1B secretion in response to non-canonical activators, such as UVB radiation or cholera enterotoxin. Involved in NLRP6 inflammasome-dependent activation in response to lipoteichoic acid (LTA), a cell-wall component of Gram-positive bacteria, which leads to CASP1 activation and IL1B secretion. Involved in LPS-induced IL6 secretion; this activity may not require caspase enzymatic activity. The non-canonical inflammasome is required for innate immunity to cytosolic, but not vacuolar, bacteria. Plays a crucial role in the restriction of S.typhimurium replication in colonic epithelial cells during infection. Activation of the non-canonical inflammasome in brain endothelial cells can lead to excessive pyroptosis, leading to blood-brain barrier breakdown. Pyroptosis limits bacterial replication, while cytokine secretion promotes the recruitment and activation of immune cells and triggers mucosal inflammation. May also act as an activator of adaptive immunity in dendritic cells, following activation by oxidized phospholipid 1-palmitoyl-2-arachidonoyl- sn-glycero-3-phosphorylcholine, an oxidized phospholipid (oxPAPC). Involved in cell death induced by endoplasmic reticulum stress and by treatment with cytotoxic APP peptides found in Alzheimer's patient brains. Cleavage of GSDMD is not strictly dependent on the consensus cleavage site but depends on an exosite interface on CASP4 that recognizes and binds the Gasdermin-D, C-terminal (GSDMD-CT) part. Catalyzes cleavage and maturation of IL18; IL18 processing also depends of the exosite interface on CASP4. In contrast, it does not directly process IL1B. During non-canonical inflammasome activation, cuts CGAS and may play a role in the regulation of antiviral innate immune activation. In terms of biological role, (Microbial infection) In response to the Td92 surface protein of the periodontal pathogen T.denticola, activated by cathepsin CTSG which leads to production and secretion of IL1A and pyroptosis of gingival fibroblasts. This is Caspase-4 from Homo sapiens (Human).